Reading from the N-terminus, the 306-residue chain is Homoserine O-succinyltransferase (306 aa).

Cys-142 serves as the catalytic Acyl-thioester intermediate. Substrate is bound by residues Lys-163 and Ser-192. His-233 functions as the Proton acceptor in the catalytic mechanism. The active site involves Glu-235. Arg-247 is a binding site for substrate.

The protein belongs to the MetA family.

The protein resides in the cytoplasm. The enzyme catalyses L-homoserine + succinyl-CoA = O-succinyl-L-homoserine + CoA. The protein operates within amino-acid biosynthesis; L-methionine biosynthesis via de novo pathway; O-succinyl-L-homoserine from L-homoserine: step 1/1. Its function is as follows. Transfers a succinyl group from succinyl-CoA to L-homoserine, forming succinyl-L-homoserine. In Pelagibacterium halotolerans (strain DSM 22347 / JCM 15775 / CGMCC 1.7692 / B2), this protein is Homoserine O-succinyltransferase.